The following is a 217-amino-acid chain: Large ribosomal subunit protein uL3 (217 aa).

The segment at serine 129–methionine 161 is disordered. Over residues alanine 142–glycine 153 the composition is skewed to low complexity.

Belongs to the universal ribosomal protein uL3 family. Part of the 50S ribosomal subunit. Forms a cluster with proteins L14 and L19.

In terms of biological role, one of the primary rRNA binding proteins, it binds directly near the 3'-end of the 23S rRNA, where it nucleates assembly of the 50S subunit. The sequence is that of Large ribosomal subunit protein uL3 from Prochlorococcus marinus subsp. pastoris (strain CCMP1986 / NIES-2087 / MED4).